Reading from the N-terminus, the 265-residue chain is Undecaprenyl-diphosphatase 1 (265 aa).

A run of 7 helical transmembrane segments spans residues 4–24 (IITAFILGIVEGLAEFLPISS), 42–62 (AKTFEIVIQLGAILAIAILYH), 84–104 (FHVFLGVFPAVVAGLLLHDVI), 108–128 (LFQPYTVVIGLVAGAILMIFA), 184–204 (SEFSFLIALPVMVGATGLDLL), 217–237 (MFAVGFITSFIVAMLAVVTFL), and 245–265 (LKPFAYYRILLAILFTVFVLL).

The protein belongs to the UppP family.

Its subcellular location is the cell membrane. The catalysed reaction is di-trans,octa-cis-undecaprenyl diphosphate + H2O = di-trans,octa-cis-undecaprenyl phosphate + phosphate + H(+). Functionally, catalyzes the dephosphorylation of undecaprenyl diphosphate (UPP). Confers resistance to bacitracin. In Bacillus anthracis, this protein is Undecaprenyl-diphosphatase 1.